The primary structure comprises 904 residues: Toll-like receptor 3 (904 aa).

The N-terminal stretch at 1-26 (MSRPLPYHIYFFTGLLTCWILCTSSA) is a signal peptide. An LRRNT domain is found at 27-52 (HKCTVRHEVADCSHLKLTQIPEDLPT). Residues 27–705 (HKCTVRHEVA…PCKDSAPFEL (679 aa)) lie on the Lumenal side of the membrane. Cysteine 29 and cysteine 38 are joined by a disulfide. N-linked (GlcNAc...) asparagine glycosylation is found at asparagine 53, asparagine 58, and asparagine 71. LRR repeat units follow at residues 53–74 (NITV…NFTR), 77–98 (RLTI…LCQN), 101–122 (WLEI…TFVF), 125–146 (NLTE…PFKN), 149–170 (NLIK…TQLQ), and 173–196 (NLQE…DFLG). Cysteine 96 and cysteine 123 are disulfide-bonded. N-linked (GlcNAc...) asparagine glycosylation is present at asparagine 125. Asparagine 197 carries N-linked (GlcNAc...) asparagine glycosylation. LRR repeat units follow at residues 199–220 (SLER…CFHA) and 223–245 (KLSG…LCLE). 4 N-linked (GlcNAc...) asparagine glycosylation sites follow: asparagine 248, asparagine 253, asparagine 276, and asparagine 292. 14 LRR repeats span residues 250–271 (SIEN…TFSG), 276–297 (NLTT…SFAW), 300–321 (HLEY…SFYG), 324–345 (NLRH…TSLP), 357–378 (CLEY…TFTG), 381–401 (RLKF…TNET), 409–430 (PLLL…AFSW), 433–455 (HLEV…EWRG), 466–487 (YNKY…QRLM), 508–529 (NLVI…LLKG), 532–553 (KLEI…ANPG), 564–585 (HLRI…AFKD), 588–609 (ELKS…VFDN), and 612–633 (SLKS…VFGP). Residues asparagine 399 and asparagine 414 are each glycosylated (N-linked (GlcNAc...) asparagine). Asparagine 637, asparagine 663, and asparagine 668 each carry an N-linked (GlcNAc...) asparagine glycan. One can recognise an LRRCT domain in the interval 646-699 (NPFDCTCESIAWFVNWINSTHTNISELSNHYLCNTPPQYHGFPVMLFDVSPCKD). 2 disulfide bridges follow: cysteine 650/cysteine 678 and cysteine 652/cysteine 697. The helical transmembrane segment at 706 to 726 (LFMINTNILLIFIFIVLLIHF) threads the bilayer. Topologically, residues 727 to 904 (EGWRISFYWN…VALGSRNSAH (178 aa)) are cytoplasmic. A TIR domain is found at 754-897 (FEYAAYIIHA…AFHHKLKVAL (144 aa)). Phosphotyrosine is present on tyrosine 759. Residues lysine 812 and lysine 831 each participate in a glycyl lysine isopeptide (Lys-Gly) (interchain with G-Cter in ubiquitin) cross-link. At tyrosine 858 the chain carries Phosphotyrosine.

It belongs to the Toll-like receptor family. As to quaternary structure, monomer and homodimer; dimerization is triggered by ligand-binding and is required for TLR3 signaling. Interacts (via transmembrane domain) with UNC93B1. Interacts with TICAM1 (via the TIR domain) in response to poly(I:C) and this interaction is enhanced the presence of WDFY1. Interacts with SRC; upon binding of double-stranded RNA. The tyrosine-phosphorylated form (via TIR domain) interacts with WDFY1 (via WD repeat 2) in response to poly(I:C). Post-translationally, ubiquitinated by TRIM3; leading to recognition and sorting of polyubiquitinated TLR3 by the ESCRT complexes. Ubiquitinated by ZNRF1 via 'Lys-63'-linked ubiquitin chains; leading to TLR3 lysosomal trafficking and degradation.

It localises to the endoplasmic reticulum membrane. It is found in the endosome membrane. The protein resides in the early endosome. In terms of biological role, key component of innate and adaptive immunity. TLRs (Toll-like receptors) control host immune response against pathogens through recognition of molecular patterns specific to microorganisms. TLR3 is a nucleotide-sensing TLR which is activated by double-stranded RNA, a sign of viral infection. Acts via the adapter TRIF/TICAM1, leading to NF-kappa-B activation, cytokine secretion and the inflammatory response. In Boselaphus tragocamelus (Nilgai), this protein is Toll-like receptor 3 (TLR3).